Here is a 98-residue protein sequence, read N- to C-terminus: MNKISPLGSNWNEFEQQIFNEEEIRESNLRVALIKELITSRQQLGISQKQLETLSGVKQPMIARIEKGQTNPQLETLLKLLAPLGKTLSIVPLRVKNA.

The region spanning 37 to 91 (LITSRQQLGISQKQLETLSGVKQPMIARIEKGQTNPQLETLLKLLAPLGKTLSIV) is the HTH cro/C1-type domain. Positions 48–67 (QKQLETLSGVKQPMIARIEK) form a DNA-binding region, H-T-H motif.

This is an uncharacterized protein from Haemophilus influenzae (strain ATCC 51907 / DSM 11121 / KW20 / Rd).